Reading from the N-terminus, the 419-residue chain is UDP-N-acetylglucosamine 1-carboxyvinyltransferase (419 aa).

22–23 (KN) is a binding site for phosphoenolpyruvate. UDP-N-acetyl-alpha-D-glucosamine is bound at residue Arg-91. The active-site Proton donor is the Cys-115. Cys-115 is subject to 2-(S-cysteinyl)pyruvic acid O-phosphothioketal. UDP-N-acetyl-alpha-D-glucosamine contacts are provided by residues 120 to 124 (RPVDL), 160 to 163 (KVSV), Asp-305, and Ile-327.

The protein belongs to the EPSP synthase family. MurA subfamily.

The protein localises to the cytoplasm. It carries out the reaction phosphoenolpyruvate + UDP-N-acetyl-alpha-D-glucosamine = UDP-N-acetyl-3-O-(1-carboxyvinyl)-alpha-D-glucosamine + phosphate. It participates in cell wall biogenesis; peptidoglycan biosynthesis. With respect to regulation, in vitro inhibited by covalent binding of fosfomycin and the fungal product terreic acid in the presence of substrate UDP-N-acetylglucosamine, with an inactivation rate constant of 130 M(-1)sec(-1) for terreic acid. In terms of biological role, cell wall formation. Adds enolpyruvyl to UDP-N-acetylglucosamine. Target for the antibiotic fosfomycin. The sequence is that of UDP-N-acetylglucosamine 1-carboxyvinyltransferase from Enterobacter cloacae subsp. cloacae (strain ATCC 13047 / DSM 30054 / NBRC 13535 / NCTC 10005 / WDCM 00083 / NCDC 279-56).